The primary structure comprises 160 residues: Nitrate reductase [NADH] (160 aa).

Thr37 lines the FAD pocket.

The protein belongs to the nitrate reductase family. In terms of assembly, homodimer. Requires FAD as cofactor. Heme is required as a cofactor. Mo-molybdopterin serves as cofactor.

It catalyses the reaction nitrite + NAD(+) + H2O = nitrate + NADH + H(+). Functionally, nitrate reductase is a key enzyme involved in the first step of nitrate assimilation in plants, fungi and bacteria. The polypeptide is Nitrate reductase [NADH] (NIA) (Lotus tetragonolobus (Winged pea)).